The following is a 30-amino-acid chain: Cliotide T19 (30 aa).

The cyclopeptide (Gly-Asn) cross-link spans 1–30; it reads GSVIKCGESCLLGKCYTPGCTCSRPICKKN. Cystine bridges form between cysteine 6-cysteine 20, cysteine 10-cysteine 22, and cysteine 15-cysteine 27.

Post-translationally, contains 3 disulfide bonds. In terms of processing, this is a cyclic peptide. Expressed in root nodules but not in seed.

Functionally, probably participates in a plant defense mechanism. Active against Gram-negative bacterium E.coli ATCC 700926 (MIC=0.6 uM) under low-salt conditions. Not active against Gram-positive bacterium S.aureus ATCC 12600 up to a concentration of 100 uM under low-salt conditions. Exhibits immunomodulatory activity but no cytotoxicity in vitro. The protein is Cliotide T19 of Clitoria ternatea (Butterfly pea).